The sequence spans 75 residues: Bacteriocin lactacin-F subunit LafA (75 aa).

A propeptide spanning residues 1–18 (MKQFNYLSHKDLAVVVGG) is cleaved from the precursor.

The protein belongs to the bacteriocin class IIB family. This bacteriocin depends upon the complementation of two peptides for activity: LafA and LafX. Associated with a 180 kDa bacteriocin complex.

Its function is as follows. Heat stable bacteriocin active against Enterococcus faecalis and other Lactobacilli. In Lactobacillus johnsonii (strain CNCM I-12250 / La1 / NCC 533), this protein is Bacteriocin lactacin-F subunit LafA (lafA).